The following is a 389-amino-acid chain: S-adenosylmethionine synthase (389 aa).

His-19 provides a ligand contact to ATP. A Mg(2+)-binding site is contributed by Asp-21. Glu-47 serves as a coordination point for K(+). Residues Glu-60 and Gln-103 each contribute to the L-methionine site. The tract at residues 103–113 is flexible loop; the sequence is QSVDIAQGVDR. ATP contacts are provided by residues 168-170, 234-235, Asp-243, 249-250, Ala-266, and Lys-270; these read DGK, RF, and RK. Asp-243 contributes to the L-methionine binding site. Lys-274 lines the L-methionine pocket.

Belongs to the AdoMet synthase family. As to quaternary structure, homotetramer; dimer of dimers. The cofactor is Mg(2+). K(+) is required as a cofactor.

It localises to the cytoplasm. It catalyses the reaction L-methionine + ATP + H2O = S-adenosyl-L-methionine + phosphate + diphosphate. It functions in the pathway amino-acid biosynthesis; S-adenosyl-L-methionine biosynthesis; S-adenosyl-L-methionine from L-methionine: step 1/1. In terms of biological role, catalyzes the formation of S-adenosylmethionine (AdoMet) from methionine and ATP. The overall synthetic reaction is composed of two sequential steps, AdoMet formation and the subsequent tripolyphosphate hydrolysis which occurs prior to release of AdoMet from the enzyme. This Maridesulfovibrio salexigens (strain ATCC 14822 / DSM 2638 / NCIMB 8403 / VKM B-1763) (Desulfovibrio salexigens) protein is S-adenosylmethionine synthase.